We begin with the raw amino-acid sequence, 59 residues long: UPF0434 protein Sbal_1685 (59 aa).

Belongs to the UPF0434 family.

The polypeptide is UPF0434 protein Sbal_1685 (Shewanella baltica (strain OS155 / ATCC BAA-1091)).